The chain runs to 910 residues: Schlafen family member 8 (910 aa).

Residues 1 to 354 (METHPSLAVK…WVRMMVDFGP (354 aa)) are n'-domain region. Active-site residues include E205 and E210. H280, C282, and C319 together coordinate Zn(2+). 599–606 (GLPGSGKT) contacts ATP.

This sequence belongs to the Schlafen family. Subgroup III subfamily. The cofactor is Mg(2+). In terms of tissue distribution, in T-cells, expressed at relatively constant levels during development: expressed in immature CD3(-)CD4(-)CD8(-) T-cells (DN stage), in CD4(+)CD8(+) double-positive stage (DP) and mature CD4(+) or CD8(+) thymocytes. Expression is slightly reduced at the DP stage.

It is found in the cytoplasm. Endoribonuclease that cleaves tRNAs and rRNAs. Cleaves tRNAs 11 nucleotides from the 3'-terminus at the acceptor stem. May be involved in immune system via regulation of inflammation. The polypeptide is Schlafen family member 8 (Mus musculus (Mouse)).